A 197-amino-acid polypeptide reads, in one-letter code: Imidazoleglycerol-phosphate dehydratase (197 aa).

Belongs to the imidazoleglycerol-phosphate dehydratase family.

The protein resides in the cytoplasm. It carries out the reaction D-erythro-1-(imidazol-4-yl)glycerol 3-phosphate = 3-(imidazol-4-yl)-2-oxopropyl phosphate + H2O. It functions in the pathway amino-acid biosynthesis; L-histidine biosynthesis; L-histidine from 5-phospho-alpha-D-ribose 1-diphosphate: step 6/9. In Methylocella silvestris (strain DSM 15510 / CIP 108128 / LMG 27833 / NCIMB 13906 / BL2), this protein is Imidazoleglycerol-phosphate dehydratase.